Reading from the N-terminus, the 187-residue chain is Nicotinamide-nucleotide adenylyltransferase (187 aa).

The protein belongs to the archaeal NMN adenylyltransferase family.

It localises to the cytoplasm. The catalysed reaction is beta-nicotinamide D-ribonucleotide + ATP + H(+) = diphosphate + NAD(+). It functions in the pathway cofactor biosynthesis; NAD(+) biosynthesis; NAD(+) from nicotinamide D-ribonucleotide: step 1/1. This Thermococcus onnurineus (strain NA1) protein is Nicotinamide-nucleotide adenylyltransferase.